The chain runs to 246 residues: Probable transcriptional regulatory protein Pden_1905 (246 aa).

Residues 1–21 (MAGHSKWANIQHRKGKQDKLR) are disordered.

Belongs to the TACO1 family.

It localises to the cytoplasm. In Paracoccus denitrificans (strain Pd 1222), this protein is Probable transcriptional regulatory protein Pden_1905.